The sequence spans 335 residues: Deoxyhypusine hydroxylase (335 aa).

HEAT-like PBS-type repeat units follow at residues 71–97, 104–130, 200–233, 238–264, and 271–298; these read LKHE…VVKD, CRHE…LRDN, QRYR…GLKD, FRHE…ALSD, and VRHE…FLND. Residues histidine 73, glutamate 74, histidine 106, and glutamate 107 each coordinate Fe cation. Fe cation contacts are provided by histidine 240, glutamate 241, histidine 273, and glutamate 274.

Belongs to the deoxyhypusine hydroxylase family. Fe(2+) is required as a cofactor.

It is found in the cytoplasm. Its subcellular location is the nucleus. The catalysed reaction is [eIF5A protein]-deoxyhypusine + AH2 + O2 = [eIF5A protein]-hypusine + A + H2O. The protein operates within protein modification; eIF5A hypusination. Its function is as follows. Catalyzes the hydroxylation of the N(6)-(4-aminobutyl)-L-lysine intermediate to form hypusine, an essential post-translational modification only found in mature eIF-5A factor. This chain is Deoxyhypusine hydroxylase (lia1), found in Aspergillus clavatus (strain ATCC 1007 / CBS 513.65 / DSM 816 / NCTC 3887 / NRRL 1 / QM 1276 / 107).